Consider the following 582-residue polypeptide: ABC transporter-like protein ECU11_1340 (582 aa).

One can recognise an ABC transporter domain in the interval Val-15 to Gly-257. Residue Gly-47–Thr-54 coordinates ATP. The region spanning Tyr-316–Phe-519 is the ABC transmembrane type-2 domain. 6 helical membrane passes run Ile-335–Ile-355, Phe-359–Asn-378, Thr-412–Ile-432, His-436–Phe-456, Gly-482–Pro-502, and Ser-551–Leu-571.

Belongs to the ABC transporter superfamily.

It is found in the membrane. This chain is ABC transporter-like protein ECU11_1340, found in Encephalitozoon cuniculi (strain GB-M1) (Microsporidian parasite).